A 131-amino-acid chain; its full sequence is Fumarate reductase subunit C (131 aa).

2 helical membrane-spanning segments follow: residues 60 to 80 (FVGFLQNPVVLILNLIVLAAA) and 110 to 130 (IKGLWAVTAVVTAVVLFVALF).

The protein belongs to the FrdC family. As to quaternary structure, part of an enzyme complex containing four subunits: a flavoprotein (FrdA), an iron-sulfur protein (FrdB), and two hydrophobic anchor proteins (FrdC and FrdD).

The protein localises to the cell inner membrane. In terms of biological role, two distinct, membrane-bound, FAD-containing enzymes are responsible for the catalysis of fumarate and succinate interconversion; fumarate reductase is used in anaerobic growth, and succinate dehydrogenase is used in aerobic growth. Anchors the catalytic components of the fumarate reductase complex to the cell inner membrane, binds quinones. The chain is Fumarate reductase subunit C from Enterobacter sp. (strain 638).